A 428-amino-acid polypeptide reads, in one-letter code: Serine--tRNA ligase (428 aa).

235-237 (TAE) serves as a coordination point for L-serine. 266–268 (RSE) provides a ligand contact to ATP. E289 provides a ligand contact to L-serine. Residue 353 to 356 (EISS) coordinates ATP. S389 is a binding site for L-serine.

The protein belongs to the class-II aminoacyl-tRNA synthetase family. Type-1 seryl-tRNA synthetase subfamily. As to quaternary structure, homodimer. The tRNA molecule binds across the dimer.

Its subcellular location is the cytoplasm. It carries out the reaction tRNA(Ser) + L-serine + ATP = L-seryl-tRNA(Ser) + AMP + diphosphate + H(+). The enzyme catalyses tRNA(Sec) + L-serine + ATP = L-seryl-tRNA(Sec) + AMP + diphosphate + H(+). Its pathway is aminoacyl-tRNA biosynthesis; selenocysteinyl-tRNA(Sec) biosynthesis; L-seryl-tRNA(Sec) from L-serine and tRNA(Sec): step 1/1. Functionally, catalyzes the attachment of serine to tRNA(Ser). Is also able to aminoacylate tRNA(Sec) with serine, to form the misacylated tRNA L-seryl-tRNA(Sec), which will be further converted into selenocysteinyl-tRNA(Sec). The chain is Serine--tRNA ligase from Shewanella frigidimarina (strain NCIMB 400).